The following is a 283-amino-acid chain: Thymidylate synthase (283 aa).

Arginine 33 is a dUMP binding site. Histidine 63 contributes to the (6R)-5,10-methylene-5,6,7,8-tetrahydrofolate binding site. 138-139 is a dUMP binding site; it reads RR. Cysteine 158 (nucleophile) is an active-site residue. DUMP-binding positions include 185–188, asparagine 196, and 226–228; these read RSAD and HIY. Aspartate 188 is a (6R)-5,10-methylene-5,6,7,8-tetrahydrofolate binding site. (6R)-5,10-methylene-5,6,7,8-tetrahydrofolate is bound at residue alanine 282.

It belongs to the thymidylate synthase family. Bacterial-type ThyA subfamily. As to quaternary structure, homodimer.

Its subcellular location is the cytoplasm. The catalysed reaction is dUMP + (6R)-5,10-methylene-5,6,7,8-tetrahydrofolate = 7,8-dihydrofolate + dTMP. It participates in pyrimidine metabolism; dTTP biosynthesis. Its function is as follows. Catalyzes the reductive methylation of 2'-deoxyuridine-5'-monophosphate (dUMP) to 2'-deoxythymidine-5'-monophosphate (dTMP) while utilizing 5,10-methylenetetrahydrofolate (mTHF) as the methyl donor and reductant in the reaction, yielding dihydrofolate (DHF) as a by-product. This enzymatic reaction provides an intracellular de novo source of dTMP, an essential precursor for DNA biosynthesis. This Methylibium petroleiphilum (strain ATCC BAA-1232 / LMG 22953 / PM1) protein is Thymidylate synthase.